The chain runs to 465 residues: UDP-N-acetylmuramate--L-alanine ligase (465 aa).

125–131 (GTHGKTT) lines the ATP pocket.

Belongs to the MurCDEF family.

It is found in the cytoplasm. The catalysed reaction is UDP-N-acetyl-alpha-D-muramate + L-alanine + ATP = UDP-N-acetyl-alpha-D-muramoyl-L-alanine + ADP + phosphate + H(+). It functions in the pathway cell wall biogenesis; peptidoglycan biosynthesis. Its function is as follows. Cell wall formation. The protein is UDP-N-acetylmuramate--L-alanine ligase of Deinococcus geothermalis (strain DSM 11300 / CIP 105573 / AG-3a).